We begin with the raw amino-acid sequence, 286 residues long: Phosphatidylglycerol--prolipoprotein diacylglyceryl transferase (286 aa).

7 consecutive transmembrane segments (helical) span residues 24–44 (IGPL…LFAW), 72–92 (FIVW…VLFY), 104–124 (IFAV…VILA), 140–160 (FDVV…ANFI), 190–210 (LYEA…LTHS), 218–238 (RFVG…VEFF), and 253–273 (WLTM…WAMA). Arginine 155 serves as a coordination point for a 1,2-diacyl-sn-glycero-3-phospho-(1'-sn-glycerol).

This sequence belongs to the Lgt family.

Its subcellular location is the cell inner membrane. It carries out the reaction L-cysteinyl-[prolipoprotein] + a 1,2-diacyl-sn-glycero-3-phospho-(1'-sn-glycerol) = an S-1,2-diacyl-sn-glyceryl-L-cysteinyl-[prolipoprotein] + sn-glycerol 1-phosphate + H(+). Its pathway is protein modification; lipoprotein biosynthesis (diacylglyceryl transfer). Functionally, catalyzes the transfer of the diacylglyceryl group from phosphatidylglycerol to the sulfhydryl group of the N-terminal cysteine of a prolipoprotein, the first step in the formation of mature lipoproteins. This Mesorhizobium japonicum (strain LMG 29417 / CECT 9101 / MAFF 303099) (Mesorhizobium loti (strain MAFF 303099)) protein is Phosphatidylglycerol--prolipoprotein diacylglyceryl transferase.